The primary structure comprises 336 residues: Potassium channel subfamily K member 1 (336 aa).

At 1–20 (MLQSLAGSSCVRLVERHRSA) the chain is on the cytoplasmic side. A helical membrane pass occupies residues 21–41 (WCFGFLVLGYLLYLVFGAVVF). The Extracellular portion of the chain corresponds to 42-103 (SSVELPYEDL…SNASGNWNWD (62 aa)). N95 carries N-linked (GlcNAc...) asparagine glycosylation. The helical intramembrane region spans 104–116 (FTSALFFASTVLS). The stretch at 117 to 122 (TTGYGH) is an intramembrane region. Residues 117–122 (TTGYGH) form a selectivity filter 1 region. Topologically, residues 123–132 (TVPLSDGGKA) are extracellular. The chain crosses the membrane as a helical span at residues 133–156 (FCIIYSVIGIPFTLLFLTAVVQRV). The Cytoplasmic portion of the chain corresponds to 157–181 (TVHVTRRPVLYFHIRWGFSKQVVAI). Residues 182–202 (VHAVLLGFVTVSCFFFIPAAV) traverse the membrane as a helical segment. Residues 203 to 211 (FSVLEDDWN) lie on the Extracellular side of the membrane. Positions 212–224 (FLESFYFCFISLS) form an intramembrane region, helical. The selectivity filter 2 stretch occupies residues 225–230 (TIGLGD). Residues 225 to 231 (TIGLGDY) lie within the membrane without spanning it. Residues 232-243 (VPGEGYNQKFRE) lie on the Extracellular side of the membrane. Residues 244 to 267 (LYKIGITCYLLLGLIAMLVVLETF) form a helical membrane-spanning segment. Residues 268–336 (CELHELKKFR…PPYEDGSANH (69 aa)) lie on the Cytoplasmic side of the membrane. K274 participates in a covalent cross-link: Glycyl lysine isopeptide (Lys-Gly) (interchain with G-Cter in SUMO). The important for intracellular retention in recycling endosomes stretch occupies residues 293–299 (IMEHDQL). Residues 310-336 (GLKEEQKQNEPFVASQSPPYEDGSANH) are disordered. The residue at position 326 (S326) is a Phosphoserine.

It belongs to the two pore domain potassium channel (TC 1.A.1.8) family. Homodimer; disulfide-linked. Heterodimer with KCNK2; disulfide-linked. In astrocytes, forms mostly heterodimeric potassium channels with KCNK2, with only a minor proportion of functional channels containing homodimeric KCNK1. Interacts with KCNK3 and KCNK9, forming functional heterodimeric channels. Interacts with GNG4. Identified in a complex with PSD and ARF6; interacts only with PSD that is bound to ARF6. Interacts with UBE2I. Post-translationally, sumoylation is controversial. Sumoylated by UBE2I. Not sumoylated when expressed in xenopus oocytes or mammalian cells. Sumoylation inactivates the channel, but does not interfere with expression at the cell membrane. Sumoylation of a single subunit is sufficient to silence the dimeric channel. Sumoylation of KCNK1 is sufficient to silence heterodimeric channels formed by KCNK1 and KCNK3 or KCNK9. Desumoylated by SENP1; this activates the channel. Desumoylated by SENP1; this strongly increases halothane-mediated activation of heterodimeric channels formed with KCNK9. SENP1 treatment has no effect. In terms of tissue distribution, detected in brain and in kidney cortex and medulla, especially at the renal brush border membranes of the proximal convoluted tubules, in distal tubules and on intercalated cells of the collecting duct. Detected in cerebellum granule neurons. Detected in astrocytes in hippocampus stratum radiatum. Highly expressed in the stria vascularis in the cochlea. Detected in neurons in Scarpa's ganglion in the inner ear, at nerve terminals in the crista ampullaris, in supporting cells and dark cells, but not in hair cells (at protein level). Detected in the brain cerebellar granule cell layer, amygdala, thalamus reticular nucleus, habenula, mesencephalic trigeminal neurons, neocortex and piriform cortex, and at lower levels in the olfactory bulb. Detected in Scarpa's ganglia and crista ampullaris in the inner ear.

Its subcellular location is the cell membrane. It is found in the recycling endosome. The protein resides in the apical cell membrane. It localises to the cytoplasmic vesicle. The protein localises to the perikaryon. Its subcellular location is the cell projection. It is found in the dendrite. The protein resides in the synaptic cell membrane. The catalysed reaction is K(+)(in) = K(+)(out). It carries out the reaction NH4(+)(in) = NH4(+)(out). It catalyses the reaction Na(+)(in) = Na(+)(out). The enzyme catalyses Rb(+)(in) = Rb(+)(out). The catalysed reaction is Cs(+)(in) = Cs(+)(out). It carries out the reaction Li(+)(in) = Li(+)(out). It catalyses the reaction L-glutamate(out) = L-glutamate(in). The enzyme catalyses chloride(in) = chloride(out). With respect to regulation, inhibited by 100 uM quinine. Slightly inhibited by Ba(+). Activity is first increased and then decreased when the extracellular pH is lowered to 6.0. Its function is as follows. Ion channel that contributes to passive transmembrane potassium transport and to the regulation of the resting membrane potential in brain astrocytes, but also in kidney and in other tissues. Forms dimeric channels through which potassium ions pass in accordance with their electrochemical gradient. The channel is selective for K(+) ions at physiological potassium concentrations and at neutral pH, but becomes permeable to Na(+) at subphysiological K(+) levels and upon acidification of the extracellular medium. The homodimer has very low potassium channel activity, when expressed in heterologous systems, and can function as weakly inward rectifying potassium channel. Channel activity is modulated by activation of serotonin receptors. Heterodimeric channels containing KCNK1 and KCNK2 have much higher activity, and may represent the predominant form in astrocytes. Heterodimeric channels containing KCNK1 and KCNK3 or KCNK9 have much higher activity. Heterodimeric channels formed by KCNK1 and KCNK9 may contribute to halothane-sensitive currents. Mediates outward rectifying potassium currents in dentate gyrus granule cells and contributes to the regulation of their resting membrane potential. Contributes to the regulation of action potential firing in dentate gyrus granule cells and down-regulates their intrinsic excitability. Contributes to the regulation of the resting membrane potential of pancreatic beta cells. In astrocytes, the heterodimer formed by KCNK1 and KCNK2 is required for rapid glutamate release in response to activation of G-protein coupled receptors, such as F2R and CNR1. Required for normal ion and water transport in the kidney. The low channel activity of homodimeric KCNK1 may be due to sumoylation. The low channel activity may be due to rapid internalization from the cell membrane and retention in recycling endosomes. Permeable to monovalent cations with ion selectivity for K(+) &gt; Rb(+) &gt;&gt; NH4(+) &gt;&gt; Cs(+) = Na(+) = Li(+). The protein is Potassium channel subfamily K member 1 of Rattus norvegicus (Rat).